Here is a 92-residue protein sequence, read N- to C-terminus: UPF0250 protein XOO3732 (92 aa).

This sequence belongs to the UPF0250 family.

This chain is UPF0250 protein XOO3732, found in Xanthomonas oryzae pv. oryzae (strain MAFF 311018).